Here is a 377-residue protein sequence, read N- to C-terminus: MNTPALLVLADGSVFHGTSIGYEGSASGEVVFNTSMTGYQEILTDPSYCKQIVTLTYPHIGNTGTNAEDEESRSVYAAGLIIRDLPLLHSNFRASESLHDYLVRNETVAIADIDTRRLTMLLREKGAQGGAILTGADATVEKAQELIAAFGSMVGKDLAKEVSCTETYEWTEGEWELGKGFVTPDKQPYHVVAYDFGVKTNILRMLASRGCRLTVVPAQTSAEDVLALNPDGVFLSNGPGDPEPCTYGIEAVQKLMESGKPIFGICLGHQLISLAIGAKTLKMRFSHHGANHPVQDLDSGKVVITSQNHGFAVDADTLPANARITHKSLFDNTLQGIELTDKPVSCFQGHPEASPGPQDVGYLSDKFIGNMKAAKQA.

A CPSase region spans residues 1 to 186; that stretch reads MNTPALLVLA…LGKGFVTPDK (186 aa). Positions 47, 238, and 240 each coordinate L-glutamine. The region spanning 190 to 377 is the Glutamine amidotransferase type-1 domain; sequence HVVAYDFGVK…IGNMKAAKQA (188 aa). Cys-266 acts as the Nucleophile in catalysis. Positions 267, 270, 308, 310, and 311 each coordinate L-glutamine. Residues His-350 and Glu-352 contribute to the active site.

This sequence belongs to the CarA family. As to quaternary structure, composed of two chains; the small (or glutamine) chain promotes the hydrolysis of glutamine to ammonia, which is used by the large (or ammonia) chain to synthesize carbamoyl phosphate. Tetramer of heterodimers (alpha,beta)4.

It catalyses the reaction hydrogencarbonate + L-glutamine + 2 ATP + H2O = carbamoyl phosphate + L-glutamate + 2 ADP + phosphate + 2 H(+). The catalysed reaction is L-glutamine + H2O = L-glutamate + NH4(+). It functions in the pathway amino-acid biosynthesis; L-arginine biosynthesis; carbamoyl phosphate from bicarbonate: step 1/1. The protein operates within pyrimidine metabolism; UMP biosynthesis via de novo pathway; (S)-dihydroorotate from bicarbonate: step 1/3. In terms of biological role, small subunit of the glutamine-dependent carbamoyl phosphate synthetase (CPSase). CPSase catalyzes the formation of carbamoyl phosphate from the ammonia moiety of glutamine, carbonate, and phosphate donated by ATP, constituting the first step of 2 biosynthetic pathways, one leading to arginine and/or urea and the other to pyrimidine nucleotides. The small subunit (glutamine amidotransferase) binds and cleaves glutamine to supply the large subunit with the substrate ammonia. The sequence is that of Carbamoyl phosphate synthase small chain from Neisseria gonorrhoeae.